A 196-amino-acid chain; its full sequence is uncharacterized protein (196 aa).

The interval 44–80 is disordered; sequence RSVAVPGTEGKKAQNLRQLPAARLTYPTSSSTRPSHA.

This is an uncharacterized protein from Treponema pallidum (strain Nichols).